Consider the following 106-residue polypeptide: Apovitellenin-1 (106 aa).

The first 24 residues, 1-24, serve as a signal peptide directing secretion; sequence MVQYRALVIAVILLLSTTVPEVHS.

This sequence belongs to the apovitellenin family. In terms of assembly, homodimer; disulfide-linked. As to expression, produced by the liver, secreted into the blood and then sequestred by receptor mediated endocytosis into growing oocytes.

In terms of biological role, protein component of the very low density lipoprotein (VLDL) of egg-laying females. Potent lipoprotein lipase inhibitor, preventing the loss of triglycerides from VLDL on their way from the liver to the growing oocytes. In Gallus gallus (Chicken), this protein is Apovitellenin-1.